The following is a 64-amino-acid chain: Protein DsrB (64 aa).

Belongs to the DsrB family.

The polypeptide is Protein DsrB (Salmonella arizonae (strain ATCC BAA-731 / CDC346-86 / RSK2980)).